Reading from the N-terminus, the 190-residue chain is Dynactin subunit 6 (190 aa).

Thr-186 bears the Phosphothreonine mark.

Belongs to the dynactin subunits 5/6 family. Dynactin subunit 6 subfamily. In terms of assembly, subunit of dynactin, a multiprotein complex part of a tripartite complex with dynein and a adapter, such as BICDL1, BICD2 or HOOK3. The dynactin complex is built around ACTR1A/ACTB filament and consists of an actin-related filament composed of a shoulder domain, a pointed end and a barbed end. Its length is defined by its flexible shoulder domain. The soulder is composed of 2 DCTN1 subunits, 4 DCTN2 and 2 DCTN3. The 4 DCNT2 (via N-terminus) bind the ACTR1A filament and act as molecular rulers to determine the length. The pointed end is important for binding dynein-dynactin cargo adapters. Consists of 4 subunits: ACTR10, DCNT4, DCTN5 and DCTN6. Within the complex DCTN6 forms a heterodimer with DCTN5. The barbed end is composed of a CAPZA1:CAPZB heterodimers, which binds ACTR1A/ACTB filament and dynactin and stabilizes dynactin. Interacts with PLK1. Interacts with N4BP2L1. Phosphorylation at Thr-186 by CDK1 during mitotic prometaphase creates a binding site for PLK1 that facilitates its recruitment to kinetochores.

The protein resides in the cytoplasm. The protein localises to the cytoskeleton. Its subcellular location is the chromosome. It is found in the centromere. It localises to the kinetochore. Functionally, part of the dynactin complex that activates the molecular motor dynein for ultra-processive transport along microtubules. The sequence is that of Dynactin subunit 6 (DCTN6) from Sus scrofa (Pig).